Reading from the N-terminus, the 144-residue chain is ATP synthase epsilon chain (144 aa).

Belongs to the ATPase epsilon chain family. In terms of assembly, F-type ATPases have 2 components, CF(1) - the catalytic core - and CF(0) - the membrane proton channel. CF(1) has five subunits: alpha(3), beta(3), gamma(1), delta(1), epsilon(1). CF(0) has three main subunits: a, b and c.

It is found in the cell inner membrane. Produces ATP from ADP in the presence of a proton gradient across the membrane. The protein is ATP synthase epsilon chain of Ectopseudomonas mendocina (strain ymp) (Pseudomonas mendocina).